The primary structure comprises 70 residues: Large ribosomal subunit protein bL31 (70 aa).

Zn(2+) is bound by residues Cys-16, Cys-18, Cys-37, and Cys-40.

Belongs to the bacterial ribosomal protein bL31 family. Type A subfamily. As to quaternary structure, part of the 50S ribosomal subunit. Requires Zn(2+) as cofactor.

Its function is as follows. Binds the 23S rRNA. The polypeptide is Large ribosomal subunit protein bL31 (Shewanella woodyi (strain ATCC 51908 / MS32)).